A 424-amino-acid chain; its full sequence is MASSNLIKQLQERGLVAQVTDEEALAERLAQGPIALYCGFDPTADSLHLGHLVPLLCLKRFQQAGHKPVALVGGATGLIGDPSFKAAERKLNTEETVQEWVDKIRKQVAPFLDFDCGENSAIAANNYDWFGNMNVLTFLRDIGKHFSVNQMINKEAVKQRLNREDQGISFIEFSYNLLQGYDFACLNKQYGVVLQIGGSDQWGNITSGIDLTRRLHQNQVFGLTVPLITKADGTKFGKTEGGAVWLDPKKTSPYKFYQFWINTADADVYRFLKFFTFMSIEEINALEEEDKNSGKAPRAQYVLAEQVTRLVHGEEGLQAAKRITECLFSGSLSALSEADFEQLAQDGVPMVEMEKGADLMQALVDSELQPSRGQARKTIASNAITINGEKQSDPEYFFKEEDRLFGRFTLLRRGKKNYCLICWK.

Tyrosine 37 serves as a coordination point for L-tyrosine. Positions 42–51 (PTADSLHLGH) match the 'HIGH' region motif. An N6-acetyllysine modification is found at lysine 144. The L-tyrosine site is built by tyrosine 175 and glutamine 179. The 'KMSKS' region signature appears at 235-239 (KFGKT). An ATP-binding site is contributed by lysine 238. The region spanning 357–414 (ADLMQALVDSELQPSRGQARKTIASNAITINGEKQSDPEYFFKEEDRLFGRFTLLRRG) is the S4 RNA-binding domain.

Belongs to the class-I aminoacyl-tRNA synthetase family. TyrS type 1 subfamily. As to quaternary structure, homodimer.

It is found in the cytoplasm. The catalysed reaction is tRNA(Tyr) + L-tyrosine + ATP = L-tyrosyl-tRNA(Tyr) + AMP + diphosphate + H(+). Catalyzes the attachment of tyrosine to tRNA(Tyr) in a two-step reaction: tyrosine is first activated by ATP to form Tyr-AMP and then transferred to the acceptor end of tRNA(Tyr). In Shigella dysenteriae serotype 1 (strain Sd197), this protein is Tyrosine--tRNA ligase.